Here is a 103-residue protein sequence, read N- to C-terminus: MSGRGKGGKGLGKGGAKRHRKVLRDNIQGITKPAIRRLARRGGVKRISGLIYEETRSVLKVFLENVIRDAVTYTEHARRKTVTAMDVVYALKRQGRTLYGFGG.

A compositionally biased stretch (gly residues) spans 1–14 (MSGRGKGGKGLGKG). A disordered region spans residues 1–20 (MSGRGKGGKGLGKGGAKRHR). Ser-2 carries the N-acetylserine modification. Lys-17 is modified (N6-acetyllysine). The DNA-binding element occupies 17 to 21 (KRHRK). An N6-methyllysine modification is found at Lys-21.

The protein belongs to the histone H4 family. The nucleosome is a histone octamer containing two molecules each of H2A, H2B, H3 and H4 assembled in one H3-H4 heterotetramer and two H2A-H2B heterodimers. The octamer wraps approximately 147 bp of DNA.

It is found in the nucleus. Its subcellular location is the chromosome. Its function is as follows. Core component of nucleosome. Nucleosomes wrap and compact DNA into chromatin, limiting DNA accessibility to the cellular machineries which require DNA as a template. Histones thereby play a central role in transcription regulation, DNA repair, DNA replication and chromosomal stability. DNA accessibility is regulated via a complex set of post-translational modifications of histones, also called histone code, and nucleosome remodeling. The protein is Histone H4 of Pyrenomonas salina.